A 171-amino-acid chain; its full sequence is Peptide methionine sulfoxide reductase MsrA (171 aa).

Cys-13 is an active-site residue.

This sequence belongs to the MsrA Met sulfoxide reductase family.

It carries out the reaction L-methionyl-[protein] + [thioredoxin]-disulfide + H2O = L-methionyl-(S)-S-oxide-[protein] + [thioredoxin]-dithiol. The catalysed reaction is [thioredoxin]-disulfide + L-methionine + H2O = L-methionine (S)-S-oxide + [thioredoxin]-dithiol. Its function is as follows. Has an important function as a repair enzyme for proteins that have been inactivated by oxidation. Catalyzes the reversible oxidation-reduction of methionine sulfoxide in proteins to methionine. This is Peptide methionine sulfoxide reductase MsrA from Mycobacterium sp. (strain MCS).